The sequence spans 61 residues: Large ribosomal subunit protein uL30 (61 aa).

This sequence belongs to the universal ribosomal protein uL30 family. In terms of assembly, part of the 50S ribosomal subunit.

The sequence is that of Large ribosomal subunit protein uL30 from Chromohalobacter salexigens (strain ATCC BAA-138 / DSM 3043 / CIP 106854 / NCIMB 13768 / 1H11).